A 457-amino-acid chain; its full sequence is Argininosuccinate lyase (457 aa).

This sequence belongs to the lyase 1 family. Argininosuccinate lyase subfamily.

It localises to the cytoplasm. The enzyme catalyses 2-(N(omega)-L-arginino)succinate = fumarate + L-arginine. It functions in the pathway amino-acid biosynthesis; L-arginine biosynthesis; L-arginine from L-ornithine and carbamoyl phosphate: step 3/3. This is Argininosuccinate lyase from Yersinia pseudotuberculosis serotype O:3 (strain YPIII).